The chain runs to 333 residues: Late embryogenesis abundant protein 1 (333 aa).

2 disordered regions span residues 1 to 20 (MASR…RRAA) and 116 to 246 (KDYT…GQGQ). A coiled-coil region spans residues 3 to 52 (SRQDRREARAEADARRAAEEIARARDERVMQAEVDARSAADEIARARADR). Basic and acidic residues-rich tracts occupy residues 116–163 (KDYT…KDAV), 172–219 (EATK…DATK), and 227–241 (DKAR…DATD).

Belongs to the LEA type 4 family.

This Oryza sativa subsp. indica (Rice) protein is Late embryogenesis abundant protein 1 (LEA1).